Here is a 776-residue protein sequence, read N- to C-terminus: Venom dipeptidyl peptidase 4 (776 aa).

The N-terminal stretch at 1 to 25 (MVPLRSFVLLNSLFLVLLAARTVVT) is a signal peptide. Residues Asn-44, Asn-66, and Asn-329 are each glycosylated (N-linked (GlcNAc...) asparagine). Intrachain disulfides connect Cys-449–Cys-452 and Cys-462–Cys-480. Residues Asn-504 and Asn-577 are each glycosylated (N-linked (GlcNAc...) asparagine). Ser-638 serves as the catalytic Charge relay system. A disulfide bridge links Cys-658 with Cys-769. 2 N-linked (GlcNAc...) asparagine glycosylation sites follow: Asn-688 and Asn-693. Catalysis depends on charge relay system residues Asp-717 and His-749.

The protein belongs to the peptidase S9B family. DPPIV subfamily. Expressed by the venom gland.

It localises to the secreted. The enzyme catalyses Release of an N-terminal dipeptide, Xaa-Yaa-|-Zaa-, from a polypeptide, preferentially when Yaa is Pro, provided Zaa is neither Pro nor hydroxyproline.. With respect to regulation, inhibited by diprotin A. Functionally, venom dipeptidyl-peptidase which removes N-terminal dipeptides sequentially from polypeptides having unsubstituted N-termini provided that the penultimate residue is proline. May process venom proteins into their active forms and/or modulate the chemotactic activity of immune cells after the insect sting. This Vespula vulgaris (Yellow jacket) protein is Venom dipeptidyl peptidase 4.